A 231-amino-acid polypeptide reads, in one-letter code: Small ribosomal subunit protein uS3 (231 aa).

In terms of domain architecture, KH type-2 spans 39 to 107 (VREFLKEKLK…PAQINIAEVR (69 aa)).

This sequence belongs to the universal ribosomal protein uS3 family. Part of the 30S ribosomal subunit. Forms a tight complex with proteins S10 and S14.

Functionally, binds the lower part of the 30S subunit head. Binds mRNA in the 70S ribosome, positioning it for translation. This chain is Small ribosomal subunit protein uS3, found in Colwellia psychrerythraea (strain 34H / ATCC BAA-681) (Vibrio psychroerythus).